Reading from the N-terminus, the 414-residue chain is O-methyltransferase sirM (414 aa).

Asp270 contributes to the S-adenosyl-L-methionine binding site. His321 acts as the Proton acceptor in catalysis.

This sequence belongs to the class I-like SAM-binding methyltransferase superfamily. Cation-independent O-methyltransferase family. COMT subfamily.

It participates in mycotoxin biosynthesis. O-methyltransferase; part of the gene cluster that mediates the biosynthesis of sirodesmin PL, an epipolythiodioxopiperazine (ETP) characterized by a disulfide bridged cyclic dipeptide and that acts as a phytotoxin which is involved in the blackleg didease of canola. SirD catalyzes the O-prenylation of L-tyrosine (L-Tyr) in the presence of dimethylallyl diphosphate (DMAPP) to yield 4-O-dimethylallyl-L-Tyr, and therefore represents probably the first pathway-specific enzyme in the biosynthesis of sirodesmin PL. 4-O-dimethylallyl-L-Tyr, then undergoes condensation with L-Ser in a reaction catalyzed by the non-ribosomal peptide synthase sirP to form the diketopiperazine (DKP) backbone. Further bishydroxylation of the DKP performed by the cytochrome P450 monooxygenase sirC leads to the production of the intermediate phomamide. This step is essential to form the reactive thiol group required for toxicity of sirodesmin PL. The next steps of sirodesmin biosynthesis are not well understood yet, but some predictions could be made from intermediate compounds identification. Phomamide is converted into phomalizarine via oxidation, probably by sirT. Further oxidation, methylation (by sirM or sirN) and reduction steps convert phomalizarine to deacetyl sirodesmin. Finally, acetyltransferase sirH probably acetylates deacetyl sirodesmin to produce sirodesmin PL. The chain is O-methyltransferase sirM from Leptosphaeria maculans (Blackleg fungus).